The sequence spans 259 residues: Glutamate racemase (259 aa).

Residues 12 to 13 (DS) and 44 to 45 (YG) contribute to the substrate site. The Proton donor/acceptor role is filled by Cys-75. 76-77 (NT) contributes to the substrate binding site. Catalysis depends on Cys-186, which acts as the Proton donor/acceptor. 187–188 (TH) contributes to the substrate binding site.

This sequence belongs to the aspartate/glutamate racemases family.

The enzyme catalyses L-glutamate = D-glutamate. The protein operates within cell wall biogenesis; peptidoglycan biosynthesis. In terms of biological role, provides the (R)-glutamate required for cell wall biosynthesis. The chain is Glutamate racemase from Clostridium novyi (strain NT).